The following is a 438-amino-acid chain: uncharacterized protein (438 aa).

N6-(pyridoxal phosphate)lysine is present on Lys273.

Belongs to the class-III pyridoxal-phosphate-dependent aminotransferase family. It depends on pyridoxal 5'-phosphate as a cofactor.

Its subcellular location is the mitochondrion. This is an uncharacterized protein from Schizosaccharomyces pombe (strain 972 / ATCC 24843) (Fission yeast).